The chain runs to 89 residues: UPF0473 protein Helmi_02360 (89 aa).

The protein belongs to the UPF0473 family.

This Heliobacterium modesticaldum (strain ATCC 51547 / Ice1) protein is UPF0473 protein Helmi_02360.